A 157-amino-acid polypeptide reads, in one-letter code: Transcription elongation factor GreA (157 aa).

Belongs to the GreA/GreB family.

In terms of biological role, necessary for efficient RNA polymerase transcription elongation past template-encoded arresting sites. The arresting sites in DNA have the property of trapping a certain fraction of elongating RNA polymerases that pass through, resulting in locked ternary complexes. Cleavage of the nascent transcript by cleavage factors such as GreA or GreB allows the resumption of elongation from the new 3'terminus. GreA releases sequences of 2 to 3 nucleotides. The chain is Transcription elongation factor GreA from Maricaulis maris (strain MCS10) (Caulobacter maris).